The primary structure comprises 256 residues: Putative F-box protein At3g51171 (256 aa).

One can recognise an F-box domain in the interval 1 to 44; it reads MVPLPWELEEDILSRLAAQSLVRFRSVCKRWNYLFDEKSFIKNH.

In Arabidopsis thaliana (Mouse-ear cress), this protein is Putative F-box protein At3g51171.